A 66-amino-acid chain; its full sequence is U10-theraphotoxin-Cg1a 1 (66 aa).

The signal sequence occupies residues Met1–Ala21. Residues Ala22 to Arg29 constitute a propeptide that is removed on maturation. Disulfide bonds link Cys31–Cys46, Cys38–Cys51, and Cys45–Cys58.

It belongs to the neurotoxin 10 (Hwtx-1) family. 29 (Jztx-13) subfamily. In terms of tissue distribution, expressed by the venom gland.

The protein localises to the secreted. Its function is as follows. Probable ion channel inhibitor. This chain is U10-theraphotoxin-Cg1a 1, found in Chilobrachys guangxiensis (Chinese earth tiger tarantula).